Here is a 37-residue protein sequence, read N- to C-terminus: Large ribosomal subunit protein bL36c (37 aa).

It belongs to the bacterial ribosomal protein bL36 family.

Its subcellular location is the plastid. The protein resides in the chloroplast. In Nicotiana tomentosiformis (Tobacco), this protein is Large ribosomal subunit protein bL36c.